A 135-amino-acid polypeptide reads, in one-letter code: Hydroxylaminobenzene mutase HabA (135 aa).

A run of 4 helical transmembrane segments spans residues 5 to 25 (LFASGLVLFLLGLVTGLLVPV), 33 to 55 (VAGHLQGMTNGPLLIIAGLLWPY), 67 to 87 (FWLLIYGTYANWLGVQLAALW), and 113 to 133 (FLLFSLIPAMFAAPIILLIGI).

It is found in the cell membrane. The enzyme catalyses N-phenylhydroxylamine = 2-aminophenol. Its function is as follows. Catalyzes the rearrangement of hydroxylaminobenzene to 2-aminophenol. Involved in the degradation of nitrobenzene. This chain is Hydroxylaminobenzene mutase HabA (habA), found in Ectopseudomonas oleovorans (Pseudomonas oleovorans).